The primary structure comprises 185 residues: Large ribosomal subunit protein uL5m (185 aa).

This sequence belongs to the universal ribosomal protein uL5 family. Component of the mitochondrial ribosome large subunit.

The protein resides in the mitochondrion. This Arabidopsis thaliana (Mouse-ear cress) protein is Large ribosomal subunit protein uL5m (RPL5).